Consider the following 156-residue polypeptide: MAGWPGAGPLCVLGGAALGVCLAGVAGQLVEPSTAPPKPKPPPLTKETVVFWDMRLWHVVGIFSLFVLSIIITLCCVFNCRVPRTRKEIEARYLQRKAAKMYTDKLETVPPLNELTEVPGEDKKKKKKKKKDSVDTVAIKVEEDEKNEAKKKKGEK.

Positions 1 to 27 (MAGWPGAGPLCVLGGAALGVCLAGVAG) are cleaved as a signal peptide. The Extracellular portion of the chain corresponds to 28–57 (QLVEPSTAPPKPKPPPLTKETVVFWDMRLW). The chain crosses the membrane as a helical span at residues 58–78 (HVVGIFSLFVLSIIITLCCVF). The Cytoplasmic portion of the chain corresponds to 79–156 (NCRVPRTRKE…NEAKKKKGEK (78 aa)). The segment at 113-135 (NELTEVPGEDKKKKKKKKKDSVD) is disordered.

As to quaternary structure, forms the MET channel composed of TMC (TMC1 or TMC2), TMIE, TOMT, CIB (CIB2 or CIB3), LHPL5 and PCDH15. In terms of tissue distribution, expressed in many tissues.

The protein resides in the membrane. Auxiliary subunit of the mechanotransducer (MET) non-specific cation channel complex located at the tips of stereocilia of cochlear hair cells and that mediates sensory transduction in the auditory system. The MET complex is composed of two dimeric pore-forming ion-conducting transmembrane TMC (TMC1 or TMC2) subunits, and aided by several auxiliary proteins including LHFPL5, TMIE, CIB2/3 and TOMT, and the tip-link PCDH15. May contribute to the formation of the pore. This chain is Transmembrane inner ear expressed protein (TMIE), found in Homo sapiens (Human).